The chain runs to 94 residues: Small ribosomal subunit protein uS19 (94 aa).

The interval 73 to 94 is disordered; that stretch reads EFAPTRTYRGHGKDAERTTRRR. The segment covering 83–94 has biased composition (basic and acidic residues); sequence HGKDAERTTRRR.

This sequence belongs to the universal ribosomal protein uS19 family.

Protein S19 forms a complex with S13 that binds strongly to the 16S ribosomal RNA. This Thermomicrobium roseum (strain ATCC 27502 / DSM 5159 / P-2) protein is Small ribosomal subunit protein uS19.